The primary structure comprises 558 residues: Kelch-like protein 23 (558 aa).

The region spanning 36–104 is the BTB domain; the sequence is TDITLQCPSG…AYTSQIEITK (69 aa). Residues 139-240 enclose the BACK domain; it reads CIGMHSFAEF…DPVYLKTALG (102 aa). Kelch repeat units follow at residues 274-320, 321-369, 370-416, 418-466, 467-508, and 510-557; these read TMYI…CLGP, NIYV…TLGG, CVYA…VLHE, IYVI…PFEN, KLYL…IMNG, and IYVT…CVYN.

The polypeptide is Kelch-like protein 23 (Klhl23) (Mus musculus (Mouse)).